A 367-amino-acid chain; its full sequence is MTIFKRISSPALLALALFGGAAHAALVPPQGYYQGIEKLKTGEGNFRCEAAPKPYTGPLQFRSKYEGSDKARATLNAASEKAFRTSTEDITTLEKGVSKMVGQYMRDGRPAQLDCTLTWLGSWARAGALLSTDYNHTGKSMRKWALGSMSGSWLRLKFSNSQPLAAHQAEADLIEKWLSRLAEQTVRDWSDLPLEKINNHSYWAAWSVMATAVATDRRDLFDWAVKEYKVGANQVDDQGFLPNEIKRKQRALAYHNYALPPLAMIASFAQANGVDLRAENNFALQRLGEGVLAGARDPSHFKARAGKKQDMTDLKVDSKYSWLEPWCALYHCVGDTLERKHDMQPFNSFRLGGDVTRVYDPSAESKK.

Residues 1-24 (MTIFKRISSPALLALALFGGAAHA) form the signal peptide. Residues 63–64 (SK), 136–137 (HT), and Y254 contribute to the substrate site.

It belongs to the polysaccharide lyase 5 family.

It localises to the periplasm. It carries out the reaction Eliminative cleavage of alginate to give oligosaccharides with 4-deoxy-alpha-L-erythro-hex-4-enuronosyl groups at their non-reducing ends and beta-D-mannuronate at their reducing end.. Its function is as follows. Catalyzes the depolymerization of alginate by cleaving the beta-1,4 glycosidic bond between two adjacent sugar residues via a beta-elimination mechanism. May serve to degrade mislocalized alginate that is trapped in the periplasmic space. The chain is Alginate lyase from Pseudomonas putida (strain ATCC 700007 / DSM 6899 / JCM 31910 / BCRC 17059 / LMG 24140 / F1).